Reading from the N-terminus, the 459-residue chain is Prenyltransferase penI (459 aa).

L-tryptophan contacts are provided by residues 107 to 108 (VV) and E111. The substrate site is built by R126, R276, K278, Y280, and Y384.

The protein belongs to the tryptophan dimethylallyltransferase family.

The catalysed reaction is quinolinone B + dimethylallyl diphosphate = peniprequinolone + diphosphate. It participates in secondary metabolite biosynthesis. Its pathway is alkaloid biosynthesis. The protein operates within mycotoxin biosynthesis. In terms of biological role, prenyltransferase; part of the gene cluster that mediates the biosynthesis of penigequinolones, potent insecticidal alkaloids that contain a highly modified 10-carbon prenyl group. The first stage is catalyzed by the nonribosomal peptide synthetase penN that condenses anthranilic acid and O-methyl-L-tyrosine to produce 4'-methoxycyclopeptin. 4'-methoxycyclopeptin is then converted to 4'-methoxydehydrocyclopeptin by the ketoglutarate-dependent dioxygenase penM through dehydrogenation to form a double bond between C-alpha and C-beta of the O-methyltyrosine side chain. PenM also converts its first product methoxydehydrocyclopeptin to 4'-methoxycyclopenin. The following conversion of 4'methoxycyclopenin into 4'-methoxyviridicatin is catalyzed by the cyclopenase penL. 4'-methoxyviridicatin is the precursor of quinolone natural products, and is further converted to quinolinone B. The prenyltransferase penI then catalyzes the canonical Friedel-Crafts alkylation of quinolinone B with dimethylallyl cation to yield dimethylallyl quinolone, which is subjected to FAD-dependent dehydrogenation by the FAD-linked oxidoreductase penH to yield conjugated aryl diene. The delta(3') double bond then serves as the site of the second alkylation with DMAPP catalyzed by the prenyltransferase penG to yield a carbenium ion intermediate, which can be attacked by H(2)O to yield a styrenyl quinolone containing a C3'-hydroxyprenyl chain, or undergo cyclization to yield yaequinolones J1 and J2. The conversion of the styrenyl quinolone into the tetrahydrofuran-containing yaequinolone C is performed by the FAD-dependent monooxygenase penE and involves epoxidation of the terminal C7'-C8' olefin, followed by epoxide ring opening initiated by the C3' hydroxyl group. The predicted cysteine hydrolase penJ acts as an epoxide hydrolase that enhances the rate of the 5-exo-tet cyclization step, increasing the yield of yaequinolone C. PenF catalyzes the cationic rearrangement of the epoxide formed by penE (before ring opening to produce yaequinolone C) into yaequinolone D. Finally, the short-chain dehydrogenase/reductase (SDR)-like reductase penD, catalyzes both the dehydration of yaequinolone D and the reduction of the resulting oxonium to yield penigequinolone. The chain is Prenyltransferase penI from Penicillium thymicola.